The following is a 206-amino-acid chain: Ion-translocating oxidoreductase complex subunit G (206 aa).

The chain crosses the membrane as a helical span at residues 9-29; it reads GITLALFAAGSTGLTAAINQM. Threonine 174 carries the post-translational modification FMN phosphoryl threonine.

This sequence belongs to the RnfG family. As to quaternary structure, the complex is composed of six subunits: RsxA, RsxB, RsxC, RsxD, RsxE and RsxG. It depends on FMN as a cofactor.

It localises to the cell inner membrane. Functionally, part of a membrane-bound complex that couples electron transfer with translocation of ions across the membrane. Required to maintain the reduced state of SoxR. This is Ion-translocating oxidoreductase complex subunit G from Escherichia coli O157:H7.